We begin with the raw amino-acid sequence, 499 residues long: GTPase Der (499 aa).

The region spanning 3–166 is the EngA-type G 1 domain; the sequence is PVIALVGRPN…QALGIFPKDN (164 aa). GTP contacts are provided by residues 9–16, 56–60, and 118–121; these read GRPNVGKS, DTGGI, and NKVD. Residues 166–199 form a disordered region; the sequence is NADENAEGEEGGELAEGEEVVAEGQEPKRIPGPS. Residues 168 to 186 are compositionally biased toward acidic residues; the sequence is DENAEGEEGGELAEGEEVV. Residues 190 to 199 are compositionally biased toward basic and acidic residues; sequence QEPKRIPGPS. Residues 204–377 enclose the EngA-type G 2 domain; the sequence is IKIAIIGRPN…SVQAAFKSAI (174 aa). Residues 210-217, 257-261, and 322-325 each bind GTP; these read GRPNVGKS, DTAGV, and NKWD. The region spanning 378-462 is the KH-like domain; it reads TRWPTSRLTQ…PIRIEYKGGD (85 aa). Basic and acidic residues predominate over residues 459 to 472; the sequence is KGGDNPYEGKKNTL. Residues 459-499 are disordered; that stretch reads KGGDNPYEGKKNTLTDRQVNKKRRLMSHHKKAEKKRRDKKR. Positions 478 to 499 are enriched in basic residues; sequence NKKRRLMSHHKKAEKKRRDKKR.

The protein belongs to the TRAFAC class TrmE-Era-EngA-EngB-Septin-like GTPase superfamily. EngA (Der) GTPase family. Associates with the 50S ribosomal subunit.

GTPase that plays an essential role in the late steps of ribosome biogenesis. The protein is GTPase Der of Stutzerimonas stutzeri (strain A1501) (Pseudomonas stutzeri).